Consider the following 128-residue polypeptide: Aspartate 1-decarboxylase (128 aa).

S25 serves as the catalytic Schiff-base intermediate with substrate; via pyruvic acid. Pyruvic acid (Ser) is present on S25. T57 contributes to the substrate binding site. The active-site Proton donor is the Y58. Residue 73-75 (GSA) coordinates substrate.

Belongs to the PanD family. In terms of assembly, heterooctamer of four alpha and four beta subunits. The cofactor is pyruvate. Post-translationally, is synthesized initially as an inactive proenzyme, which is activated by self-cleavage at a specific serine bond to produce a beta-subunit with a hydroxyl group at its C-terminus and an alpha-subunit with a pyruvoyl group at its N-terminus.

Its subcellular location is the cytoplasm. The catalysed reaction is L-aspartate + H(+) = beta-alanine + CO2. The protein operates within cofactor biosynthesis; (R)-pantothenate biosynthesis; beta-alanine from L-aspartate: step 1/1. In terms of biological role, catalyzes the pyruvoyl-dependent decarboxylation of aspartate to produce beta-alanine. The chain is Aspartate 1-decarboxylase from Burkholderia thailandensis (strain ATCC 700388 / DSM 13276 / CCUG 48851 / CIP 106301 / E264).